A 54-amino-acid chain; its full sequence is Ribulose bisphosphate carboxylase large chain (54 aa).

A propeptide spanning residues 1–2 is cleaved from the precursor; it reads MS. Proline 3 is modified (N-acetylproline). Lysine 14 is subject to N6,N6,N6-trimethyllysine.

The protein belongs to the RuBisCO large chain family. Type I subfamily. In terms of assembly, heterohexadecamer of 8 large chains and 8 small chains.

It is found in the plastid. The protein localises to the chloroplast. The enzyme catalyses 2 (2R)-3-phosphoglycerate + 2 H(+) = D-ribulose 1,5-bisphosphate + CO2 + H2O. The catalysed reaction is D-ribulose 1,5-bisphosphate + O2 = 2-phosphoglycolate + (2R)-3-phosphoglycerate + 2 H(+). Its function is as follows. RuBisCO catalyzes two reactions: the carboxylation of D-ribulose 1,5-bisphosphate, the primary event in carbon dioxide fixation, as well as the oxidative fragmentation of the pentose substrate in the photorespiration process. Both reactions occur simultaneously and in competition at the same active site. This Geum borisii (Avens) protein is Ribulose bisphosphate carboxylase large chain (rbcL).